Consider the following 260-residue polypeptide: MDKKIVIPGDLISENSKKAGYGTYVKNDKIYSLFCGIENLKEDKVGVIPLAGVYIPSANDVVIGIVIVVTPSNWIMDIASPYDGLFHVSEYPRRIESREMHEVLNVGDSIILRVKDVDNSMKVELALRDSSFHKLKTGQIVEVEPVKVPRVIGHGGSMISMLKKETNCSIFVGQNGRIWIDGKDDDVELLSKALRKIEAEAQRSGLTDRIYNFLKNERSKQKESKPAKFFKSGKKEVKLPKEDHSEEIYRKIDVLLDPNN.

The S1 motif domain maps to 59–128; it reads NDVVIGIVIV…NSMKVELALR (70 aa). One can recognise a KH domain in the interval 136-194; the sequence is KTGQIVEVEPVKVPRVIGHGGSMISMLKKETNCSIFVGQNGRIWIDGKDDDVELLSKAL.

This sequence belongs to the RRP4 family. Component of the archaeal exosome complex. Forms a trimer of Rrp4 and/or Csl4 subunits. The trimer associates with a hexameric ring-like arrangement composed of 3 Rrp41-Rrp42 heterodimers.

It localises to the cytoplasm. Non-catalytic component of the exosome, which is a complex involved in RNA degradation. Increases the RNA binding and the efficiency of RNA degradation. Confers strong poly(A) specificity to the exosome. The polypeptide is Exosome complex component Rrp4 (Methanosarcina barkeri (strain Fusaro / DSM 804)).